The primary structure comprises 1403 residues: Baculoviral IAP repeat-containing protein 1e (1403 aa).

BIR repeat units follow at residues 60–127 (EAKR…CEFL), 159–227 (EEAR…CEFL), and 278–345 (EELR…CVFL). Zn(2+)-binding residues include Cys315, Cys318, His335, and Cys342. Positions 464 to 759 (SVMCVEGETG…EFLAAVRLTE (296 aa)) constitute an NACHT domain. 473–478 (GSGKTT) lines the ATP pocket.

Component of the NLRC4 inflammasome, at least composed of NLRC4, caspase-1 (CASP1) and some NAIP protein. Flagellin binding by NAIP5 triggers assembly of the inflammasome, a huge complex that contains a single NAIP5 chain and multiple copies of NLRC4. In terms of assembly, (Microbial infection) Interacts with S.typhimurium (Salmonella) flagellin. As to quaternary structure, (Microbial infection) Interacts with L.pneumophila flagellin. As to expression, detected in macrophages (at protein level).

Sensor component of the NLRC4 inflammasome that specifically recognizes and binds flagellin from pathogenic bacteria such as Legionella or Salmonella. Association of pathogenic bacteria proteins drives in turn drive assembly and activation of the NLRC4 inflammasome, promoting caspase-1 activation, cytokine production and macrophage pyroptosis. The NLRC4 inflammasome is activated as part of the innate immune response to a range of intracellular bacteria. The NLRC4 inflammasome senses Gram-negative bacteria such as L.pneumophila and P.aeruginosa, enteric pathogens S.typhimurium (Salmonella) and S.flexneri. May contribute to prevent motor-neuron apoptosis induced by a variety of signals. The polypeptide is Baculoviral IAP repeat-containing protein 1e (Mus musculus (Mouse)).